Consider the following 135-residue polypeptide: Ribosome-binding factor A (135 aa).

A disordered region spans residues 115 to 135 (VNEDKRKQQDSGREEDQAGEE). Basic and acidic residues predominate over residues 116 to 135 (NEDKRKQQDSGREEDQAGEE).

It belongs to the RbfA family. In terms of assembly, monomer. Binds 30S ribosomal subunits, but not 50S ribosomal subunits or 70S ribosomes.

The protein resides in the cytoplasm. In terms of biological role, one of several proteins that assist in the late maturation steps of the functional core of the 30S ribosomal subunit. Associates with free 30S ribosomal subunits (but not with 30S subunits that are part of 70S ribosomes or polysomes). Required for efficient processing of 16S rRNA. May interact with the 5'-terminal helix region of 16S rRNA. The polypeptide is Ribosome-binding factor A (Vibrio campbellii (strain ATCC BAA-1116)).